The chain runs to 345 residues: Baculoviral IAP repeat-containing protein 7-B (345 aa).

BIR repeat units lie at residues 46–112 (RQRS…PFLQ) and 154–219 (RLGS…DFLL). Positions 188, 191, 208, and 215 each coordinate Zn(2+). Ser-237 carries the post-translational modification Phosphoserine. Ser-241 carries the post-translational modification Phosphoserine; by MAPK1. Ser-253 is modified (phosphoserine). Ser-257 is subject to Phosphoserine; by MAPK1. The segment at 258 to 286 (TESVSVPRAPTPGERSEPPKVSGPPLSTE) is disordered. An RING-type zinc finger spans residues 298-333 (CKVCMDKDVSMLFVPCGHLVVCTECAPNLRHCPICR).

It belongs to the IAP family. Auto-ubiquitinated, and degraded in a 2-step mechanism; a caspase-independent first step and a caspase-dependent second step. In terms of processing, phosphorylated via MAPK-dependent and CDK-dependent pathways during oocyte maturation. Phosphorylation does not appear to affect caspase inhibition or autoubiquitination activity.

It is found in the cytoplasm. The enzyme catalyses S-ubiquitinyl-[E2 ubiquitin-conjugating enzyme]-L-cysteine + [acceptor protein]-L-lysine = [E2 ubiquitin-conjugating enzyme]-L-cysteine + N(6)-ubiquitinyl-[acceptor protein]-L-lysine.. Weak apoptotic suppressor. Has E3 ubiquitin-protein ligase activity. Weak inhibitor of caspase activity. The polypeptide is Baculoviral IAP repeat-containing protein 7-B (birc7-b) (Xenopus laevis (African clawed frog)).